Reading from the N-terminus, the 498-residue chain is Lipase 3 (498 aa).

Cysteine 60 and cysteine 91 are joined by a disulfide. Asparagine 193 carries N-linked (GlcNAc...) asparagine glycosylation. The Acyl-ester intermediate role is filled by serine 200. The N-linked (GlcNAc...) asparagine glycan is linked to asparagine 384. Residue histidine 409 is the Charge relay system of the active site. N-linked (GlcNAc...) asparagine glycosylation occurs at asparagine 418.

This sequence belongs to the type-B carboxylesterase/lipase family.

It catalyses the reaction a triacylglycerol + H2O = a diacylglycerol + a fatty acid + H(+). This chain is Lipase 3 (LIP3), found in Yarrowia lipolytica (strain CLIB 122 / E 150) (Yeast).